We begin with the raw amino-acid sequence, 111 residues long: Protein IDA-LIKE 5 (111 aa).

Positions 1-27 are cleaved as a signal peptide; sequence MGNKRIKAMMILVVMIMMVFSWRICEA. A compositionally biased stretch (basic residues) spans 46–56; that stretch reads RRPNPRNHHHQ. Residues 46-65 are disordered; sequence RRPNPRNHHHQNQGFNGDDY.

In terms of tissue distribution, expressed mainly in flowers. Lower levels in buds and seedlings. Detected in vascular tissues and in hydathodes.

The protein resides in the secreted. It is found in the extracellular space. May be involved in floral abscission. This Arabidopsis thaliana (Mouse-ear cress) protein is Protein IDA-LIKE 5 (IDL5).